The chain runs to 371 residues: S-adenosylmethionine:tRNA ribosyltransferase-isomerase (371 aa).

It belongs to the QueA family. Monomer.

The protein localises to the cytoplasm. It carries out the reaction 7-aminomethyl-7-carbaguanosine(34) in tRNA + S-adenosyl-L-methionine = epoxyqueuosine(34) in tRNA + adenine + L-methionine + 2 H(+). Its pathway is tRNA modification; tRNA-queuosine biosynthesis. Functionally, transfers and isomerizes the ribose moiety from AdoMet to the 7-aminomethyl group of 7-deazaguanine (preQ1-tRNA) to give epoxyqueuosine (oQ-tRNA). The sequence is that of S-adenosylmethionine:tRNA ribosyltransferase-isomerase from Prochlorococcus marinus (strain MIT 9303).